The following is a 283-amino-acid chain: Thymidylate synthase (283 aa).

A dUMP-binding site is contributed by R22. C160 serves as the catalytic Nucleophile. DUMP-binding positions include 180–183 (RSCD), N191, and 221–223 (HIY). D183 contributes to the (6R)-5,10-methylene-5,6,7,8-tetrahydrofolate binding site. (6R)-5,10-methylene-5,6,7,8-tetrahydrofolate is bound at residue S282.

Belongs to the thymidylate synthase family. Bacterial-type ThyA subfamily. In terms of assembly, homodimer.

It is found in the cytoplasm. The enzyme catalyses dUMP + (6R)-5,10-methylene-5,6,7,8-tetrahydrofolate = 7,8-dihydrofolate + dTMP. It participates in pyrimidine metabolism; dTTP biosynthesis. In terms of biological role, catalyzes the reductive methylation of 2'-deoxyuridine-5'-monophosphate (dUMP) to 2'-deoxythymidine-5'-monophosphate (dTMP) while utilizing 5,10-methylenetetrahydrofolate (mTHF) as the methyl donor and reductant in the reaction, yielding dihydrofolate (DHF) as a by-product. This enzymatic reaction provides an intracellular de novo source of dTMP, an essential precursor for DNA biosynthesis. This chain is Thymidylate synthase, found in Vibrio parahaemolyticus serotype O3:K6 (strain RIMD 2210633).